The following is a 427-amino-acid chain: Enolase (427 aa).

Gln-163 contributes to the (2R)-2-phosphoglycerate binding site. Residue Glu-205 is the Proton donor of the active site. Positions 242, 285, and 312 each coordinate Mg(2+). 4 residues coordinate (2R)-2-phosphoglycerate: Lys-337, Arg-366, Ser-367, and Lys-388. Lys-337 acts as the Proton acceptor in catalysis.

The protein belongs to the enolase family. It depends on Mg(2+) as a cofactor.

The protein resides in the cytoplasm. Its subcellular location is the secreted. It localises to the cell surface. The catalysed reaction is (2R)-2-phosphoglycerate = phosphoenolpyruvate + H2O. The protein operates within carbohydrate degradation; glycolysis; pyruvate from D-glyceraldehyde 3-phosphate: step 4/5. Catalyzes the reversible conversion of 2-phosphoglycerate (2-PG) into phosphoenolpyruvate (PEP). It is essential for the degradation of carbohydrates via glycolysis. This is Enolase from Rhodopseudomonas palustris (strain BisB5).